A 755-amino-acid polypeptide reads, in one-letter code: Leucine-rich repeat-containing protein 36 (755 aa).

LRR repeat units follow at residues 51–72 (SLRSLDLSRNLITSLKGIQYLC) and 73–94 (SLQELNLYYNNIPSLVEVSRLQ). The 40-residue stretch at 107–146 (NPVVRKDTDYRLFAVYTLQTLEKLDDRAVRDSERRAAKLH) folds into the LRRCT domain. 2 disordered regions span residues 354 to 374 (GKNYREHSIKPSQDKKATTSH) and 448 to 517 (LPPG…PPIS). Over residues 356–370 (NYREHSIKPSQDKKA) the composition is skewed to basic and acidic residues. Residues 498–510 (LSSDLGSLHGLSG) are compositionally biased toward low complexity. The stretch at 601–671 (VESLKQKLVK…ELTQLKRLEE (71 aa)) forms a coiled coil. The interval 701-755 (YSGKSLLPPEKSHPLGRSSPFGKSTLSSSSPMVHDTGQYLIQSVSEADPEPSLWS) is disordered. The span at 721 to 731 (FGKSTLSSSSP) shows a compositional bias: polar residues.

This is Leucine-rich repeat-containing protein 36 (Lrrc36) from Mus musculus (Mouse).